Here is a 958-residue protein sequence, read N- to C-terminus: MTQTLTQLEYRDEFIRRHIGSSPEQIKEMLDVVGISSLNELTQKIVPDNIQLATPPNVGGGATEQEALAELKAIARKNKRFTSYIGMGYAPSVLPPVILRNLLENPGWYTAYTPYQPEVSQGRLESLLNFQQVTIDYTGMDLASASLLDEATAAAEAMAMAKRVSKLKNAERFFVADDIHPQTLDVVKTRANTFGFEVIVDKAEKVLELEGVFGVLLQQVGTTGEIHDYSQLISELKTRKIITSVAADLMALVLLTAPGQQGADIVLGSAQRFGVPMGYGGPHAAFFACRDEYKRAMPGRIIGVSRDAAGNRALRMAMQTREQHIRREKANSNICTSQVLLANIAAMYAVYHGPEGLKNIAQRIHRLTDILAAGLIQNGMTLRHQTWFDTLTVETADKAGVLQRAKDAEINLRTDIVGAVGVTLSEVTTREDVVRLIEIISGKAFSDDIDTLDALVASSSTSIPTAMLRKDAVLTHENFHLYHSETEMMRYMHRLENKDLALNQAMIPLGSCTMKLNAAAEMLPITWPEFTEMHPFCPPYQAQGYQIMIEQLSNWLAAITGYDAMCMQPNSGAQGEYAGLLAIRRYHQSRGEGNRHICLIPSSAHGTNPASAHMAGMTVVVVGCDENGNIDIADLKAKAEKHQAELSCVMVTYPSTHGVYEEGIREVCEIIHQYGGQVYLDGANMNAQVGITTPGFIGSDVSHLNLHKTFCIPHGGGGPGMGPIGVKAHLAPFVPGHSVVEMDGVTTQGAVSAAQFGSASILPISWMYIRMMGSEGLKQASQVAILNANYIAQRLKDDYDILYSGAEGYVAHECIIDIRPLKANYGISEMDVAKRLIDYGFHAPTMSFPVAGTLMIEPTESESKVEIDRFIDALLSIRAEIAQVDDGVWPIDDNPLVNAPHTQYELVQEWSHSYSRECAVFPSEATKRNKYWPAVKRLDDVYGDRHLHCSCAPISDYE.

K708 carries the post-translational modification N6-(pyridoxal phosphate)lysine.

Belongs to the GcvP family. As to quaternary structure, the glycine cleavage system is composed of four proteins: P, T, L and H. It depends on pyridoxal 5'-phosphate as a cofactor.

The catalysed reaction is N(6)-[(R)-lipoyl]-L-lysyl-[glycine-cleavage complex H protein] + glycine + H(+) = N(6)-[(R)-S(8)-aminomethyldihydrolipoyl]-L-lysyl-[glycine-cleavage complex H protein] + CO2. Functionally, the glycine cleavage system catalyzes the degradation of glycine. The P protein binds the alpha-amino group of glycine through its pyridoxal phosphate cofactor; CO(2) is released and the remaining methylamine moiety is then transferred to the lipoamide cofactor of the H protein. This Proteus mirabilis (strain HI4320) protein is Glycine dehydrogenase (decarboxylating).